The sequence spans 296 residues: MSMPKIVLFYVFTPLADPEAIRLWQKALAEKWNLKGRVIISKDGINATLGGELNDVKRYCRETRSYAPFKNADIKWSEGEGDDFPRLSVKVRPELVTFGAGDELKVNEEGVIGGGTHLKPEDLHHLMDERGDDVVFFDGRNAMEAEIGKFRNAVVPNTTTTRDFLNEIESGKYDDLKKRPVVTYCTGGIRCEVLSVLMKNRGFEEVYQLDGGIVRYGEAYGNDGYWDGSLYVFDKRMHMEFGSGTESLGHCVECGKPTAQFVNCANNDCRKLFLRCDECTAAHKHQYCGECEPALV.

The region spanning 130–225 is the Rhodanese domain; sequence RGDDVVFFDG…YGEAYGNDGY (96 aa). The Cysteine persulfide intermediate role is filled by Cys185.

This sequence belongs to the TrhO family.

It carries out the reaction uridine(34) in tRNA + AH2 + O2 = 5-hydroxyuridine(34) in tRNA + A + H2O. In terms of biological role, catalyzes oxygen-dependent 5-hydroxyuridine (ho5U) modification at position 34 in tRNAs. In Corynebacterium kroppenstedtii (strain DSM 44385 / JCM 11950 / CIP 105744 / CCUG 35717), this protein is tRNA uridine(34) hydroxylase.